Reading from the N-terminus, the 502-residue chain is DnaJ homolog subfamily C member 3 homolog (502 aa).

The N-terminal stretch at 1–25 (MIVNKKYFLLICIIILISINCLVLA) is a signal peptide. 8 TPR repeats span residues 29–62 (IENFLKEGDDLVSKGKYDLANENYSNAIDLIGSD), 69–102 (VSLLFKRAGIYHQKGKNILALSDLNRAIEANPDN), 103–136 (IHARLKRAKIQSSLGRFEEAMDEYKRVLKIRPDN), 184–217 (KEVRLMLCECFFQQGDHRKVLDETMTILKSEPSS), 218–251 (VAALYWRGKTFFSMGEKEIAMKFLKEGLKFDPDN), 264–297 (FEKSTANAQELFNQQKYQDALGQIEDALEIEPNS), 302–335 (TPLYLLKCKCLLKVKKGKESIEACNRALELDELN), and 336–369 (ADALYNRAEAYMYEEDYQKALNDYNKAREHKPND). The N-linked (GlcNAc...) asparagine glycan is linked to Asn51. Cysteines 309 and 325 form a disulfide. The J domain occupies 390 to 457 (DYYKILGIQK…EKRKRYDMGE (68 aa)).

The protein resides in the secreted. It is found in the endoplasmic reticulum lumen. May be involved in the unfolded protein response (UPR) during ER stress. The chain is DnaJ homolog subfamily C member 3 homolog (dnajc3) from Dictyostelium discoideum (Social amoeba).